Consider the following 384-residue polypeptide: NAD(P) transhydrogenase subunit alpha part 1 (384 aa).

The RQD loop; involved in interaction with PntB stretch occupies residues 126–136 (PRISRAQSMDI). Residues 127 to 129 (RIS), 132 to 135 (QSMD), 180 to 182 (VGV), 202 to 204 (DVR), Gly234, Gln247, and Leu266 each bind NAD(+).

The protein belongs to the AlaDH/PNT family. Heterotrimer of two alpha chains and a beta (PntB) chain; in Rhodospirillum, the alpha chain is made of two subunits (PntAA and PntAB) and forms a dimer.

The enzyme catalyses NAD(+) + NADPH + H(+)(in) = NADH + NADP(+) + H(+)(out). The transhydrogenation between NADH and NADP is coupled to respiration and ATP hydrolysis and functions as a proton pump across the membrane. This chain is NAD(P) transhydrogenase subunit alpha part 1 (pntAA), found in Rhodospirillum rubrum (strain ATCC 11170 / ATH 1.1.1 / DSM 467 / LMG 4362 / NCIMB 8255 / S1).